The following is a 33-amino-acid chain: Brevinin-2PTe (33 aa).

A disulfide bridge links cysteine 27 with cysteine 33.

As to expression, expressed by the skin glands.

It is found in the secreted. In terms of biological role, has antibacterial activity against the Gram-positive bacterium S.aureus ATCC 25923 (MIC=36 uM) and the Gram-negative bacterium E.coli ATCC 25726 (MIC=18 uM). The chain is Brevinin-2PTe from Pulchrana picturata (Malaysian fire frog).